Consider the following 354-residue polypeptide: Uroporphyrinogen decarboxylase (354 aa).

Residues Arg27 to Arg31, Asp77, Tyr154, Thr209, and His327 each bind substrate.

This sequence belongs to the uroporphyrinogen decarboxylase family. In terms of assembly, homodimer.

The protein localises to the cytoplasm. The catalysed reaction is uroporphyrinogen III + 4 H(+) = coproporphyrinogen III + 4 CO2. It functions in the pathway porphyrin-containing compound metabolism; protoporphyrin-IX biosynthesis; coproporphyrinogen-III from 5-aminolevulinate: step 4/4. Functionally, catalyzes the decarboxylation of four acetate groups of uroporphyrinogen-III to yield coproporphyrinogen-III. The chain is Uroporphyrinogen decarboxylase from Pectobacterium carotovorum subsp. carotovorum (strain PC1).